Reading from the N-terminus, the 119-residue chain is DNA-binding protein inhibitor ID-3 (119 aa).

Residues 28 to 80 (RGKGPAAEEPLSLLDDMNHCYSRLRELVPGVPRGTQLSQVEILQRVIDYILDL) enclose the bHLH domain.

As to quaternary structure, homodimer, and heterodimer with other HLH proteins. Interacts with COPS5 and COPS7A. Interacts with IFI204. Interacts with GATA4 and NKX2-5. Interacts with ANKRD2; both proteins cooperate in myoblast differentiation. Interacts with CLOCK and BMAL1.

The protein resides in the nucleus. Transcriptional regulator (lacking a basic DNA binding domain) which negatively regulates the basic helix-loop-helix (bHLH) transcription factors by forming heterodimers and inhibiting their DNA binding and transcriptional activity. Implicated in regulating a variety of cellular processes, including cellular growth, senescence, differentiation, apoptosis, angiogenesis, and neoplastic transformation. Involved in myogenesis by inhibiting skeletal muscle and cardiac myocyte differentiation and promoting muscle precursor cells proliferation. Inhibits the binding of E2A-containing protein complexes to muscle creatine kinase E-box enhancer. Regulates the circadian clock by repressing the transcriptional activator activity of the CLOCK-BMAL1 heterodimer. The sequence is that of DNA-binding protein inhibitor ID-3 (ID3) from Canis lupus familiaris (Dog).